The chain runs to 342 residues: Ribosomal RNA small subunit methyltransferase H (342 aa).

S-adenosyl-L-methionine contacts are provided by residues 43–45 (GGY), Asp61, Phe87, Asp108, and Gln115. Positions 322–342 (ALDEASDGMNLPPLAELEKSR) are disordered.

It belongs to the methyltransferase superfamily. RsmH family.

It localises to the cytoplasm. The catalysed reaction is cytidine(1402) in 16S rRNA + S-adenosyl-L-methionine = N(4)-methylcytidine(1402) in 16S rRNA + S-adenosyl-L-homocysteine + H(+). Its function is as follows. Specifically methylates the N4 position of cytidine in position 1402 (C1402) of 16S rRNA. This chain is Ribosomal RNA small subunit methyltransferase H, found in Hyphomonas neptunium (strain ATCC 15444).